A 151-amino-acid chain; its full sequence is uncharacterized protein (151 aa).

Helical transmembrane passes span 22-42 (IVSI…GFFF), 62-82 (ALFI…TKII), 97-117 (LFAF…ADYF), and 121-141 (IYIP…IELA).

It is found in the cell membrane. This is an uncharacterized protein from Bacillus subtilis (strain 168).